The chain runs to 181 residues: Insulin-like growth factor 2 (181 aa).

Positions 1–24 (MGIPMRKPLLVLLVFLALASCCYA) are cleaved as a signal peptide. Residues 25-52 (AYRPSETLCGGELVDTLQFVCGDRGFYF) are b. Intrachain disulfides connect cysteine 33–cysteine 71, cysteine 45–cysteine 84, and cysteine 70–cysteine 75. The tract at residues 53–64 (SRPASRVNRRSR) is c. The a stretch occupies residues 65–85 (GIVEECCFRSCDLALLETYCA). The segment at 86-91 (TPAKSE) is d. Positions 92 to 181 (RDVSTPPTVL…ASPEASGHRK (90 aa)) are cleaved as a propeptide — e peptide. The disordered stretch occupies residues 151 to 181 (EAKRHRPLTARPTRDPAAHGGASPEASGHRK). Threonine 163 carries an O-linked (GalNAc...) threonine glycan.

Belongs to the insulin family. Interacts with MYORG; this interaction is required for IGF2 secretion. Interacts with integrins ITGAV:ITGB3 and ITGA6:ITGB4; integrin-binding is required for IGF2 signaling. Interacts with IGFBP2. Post-translationally, proteolytically processed by PCSK4, proIGF2 is cleaved at Arg-128 and Arg-92 to generate big-IGF2 and mature IGF2.

It localises to the secreted. Its function is as follows. The insulin-like growth factors possess growth-promoting activity. Major fetal growth hormone in mammals. Plays a key role in regulating fetoplacental development. IGF2 is influenced by placental lactogen. Also involved in tissue differentiation. In adults, involved in glucose metabolism in adipose tissue, skeletal muscle and liver. Acts as a ligand for integrin which is required for IGF2 signaling. Positively regulates myogenic transcription factor MYOD1 function by facilitating the recruitment of transcriptional coactivators, thereby controlling muscle terminal differentiation. Inhibits myoblast differentiation and modulates metabolism via increasing the mitochondrial respiration rate. Functionally, preptin undergoes glucose-mediated co-secretion with insulin, and acts as a physiological amplifier of glucose-mediated insulin secretion. Exhibits osteogenic properties by increasing osteoblast mitogenic activity through phosphoactivation of MAPK1 and MAPK3. In Sus scrofa (Pig), this protein is Insulin-like growth factor 2.